The sequence spans 328 residues: Tyrosine recombinase XerC (328 aa).

The region spanning 13-100 is the Core-binding (CB) domain; that stretch reads QAPHPQIAAY…AWRGWFKWMA (88 aa). In terms of domain architecture, Tyr recombinase spans 122 to 319; the sequence is RLPKALSVEQ…DFQHLAKIYD (198 aa). Active-site residues include Arg-162, Lys-197, His-271, Arg-274, and His-297. The O-(3'-phospho-DNA)-tyrosine intermediate role is filled by Tyr-306.

This sequence belongs to the 'phage' integrase family. XerC subfamily. As to quaternary structure, forms a cyclic heterotetrameric complex composed of two molecules of XerC and two molecules of XerD.

The protein localises to the cytoplasm. Functionally, site-specific tyrosine recombinase, which acts by catalyzing the cutting and rejoining of the recombining DNA molecules. The XerC-XerD complex is essential to convert dimers of the bacterial chromosome into monomers to permit their segregation at cell division. It also contributes to the segregational stability of plasmids. The chain is Tyrosine recombinase XerC from Ralstonia pickettii (strain 12J).